Reading from the N-terminus, the 261-residue chain is Imidazole glycerol phosphate synthase subunit HisF (261 aa).

Catalysis depends on residues Asp16 and Asp135.

The protein belongs to the HisA/HisF family. As to quaternary structure, heterodimer of HisH and HisF.

It localises to the cytoplasm. It catalyses the reaction 5-[(5-phospho-1-deoxy-D-ribulos-1-ylimino)methylamino]-1-(5-phospho-beta-D-ribosyl)imidazole-4-carboxamide + L-glutamine = D-erythro-1-(imidazol-4-yl)glycerol 3-phosphate + 5-amino-1-(5-phospho-beta-D-ribosyl)imidazole-4-carboxamide + L-glutamate + H(+). It functions in the pathway amino-acid biosynthesis; L-histidine biosynthesis; L-histidine from 5-phospho-alpha-D-ribose 1-diphosphate: step 5/9. In terms of biological role, IGPS catalyzes the conversion of PRFAR and glutamine to IGP, AICAR and glutamate. The HisF subunit catalyzes the cyclization activity that produces IGP and AICAR from PRFAR using the ammonia provided by the HisH subunit. The chain is Imidazole glycerol phosphate synthase subunit HisF from Mycolicibacterium vanbaalenii (strain DSM 7251 / JCM 13017 / BCRC 16820 / KCTC 9966 / NRRL B-24157 / PYR-1) (Mycobacterium vanbaalenii).